A 285-amino-acid polypeptide reads, in one-letter code: Meiotically up-regulated gene 125 protein (285 aa).

The protein resides in the cytoplasm. The protein localises to the nucleus. In terms of biological role, has a role in meiosis. In Schizosaccharomyces pombe (strain 972 / ATCC 24843) (Fission yeast), this protein is Meiotically up-regulated gene 125 protein (mug125).